The chain runs to 150 residues: Azurin (150 aa).

The first 21 residues, 1–21, serve as a signal peptide directing secretion; the sequence is MFKQVLGGMALMAAFSAPVLA. One can recognise a Plastocyanin-like domain in the interval 22 to 150; sequence AECSVDIAGT…LMKGTLKLVD (129 aa). C24 and C47 are oxidised to a cystine. 4 residues coordinate Cu cation: H67, C133, H138, and M142.

It localises to the periplasm. The polypeptide is Azurin (Bordetella bronchiseptica (strain ATCC BAA-588 / NCTC 13252 / RB50) (Alcaligenes bronchisepticus)).